The primary structure comprises 130 residues: Small ribosomal subunit protein uS9 (130 aa).

Belongs to the universal ribosomal protein uS9 family.

This is Small ribosomal subunit protein uS9 from Serratia proteamaculans (strain 568).